The following is a 249-amino-acid chain: Metallo-beta-lactamase type 2 (249 aa).

An N-terminal signal peptide occupies residues M1 to G22. Residues H98, H100, D102, H161, and C180 each coordinate Zn(2+). Position 183 (K183) interacts with substrate. H222 is a Zn(2+) binding site.

The protein belongs to the metallo-beta-lactamase superfamily. Class-B beta-lactamase family. In terms of assembly, monomer. Zn(2+) serves as cofactor.

It localises to the periplasm. It catalyses the reaction a beta-lactam + H2O = a substituted beta-amino acid. Functionally, confers resistance to the different beta-lactams antibiotics (penicillin, cephalosporin and carbapenem) via the hydrolysis of the beta-lactam ring. This chain is Metallo-beta-lactamase type 2 (blaB4), found in Elizabethkingia meningoseptica (Chryseobacterium meningosepticum).